A 324-amino-acid polypeptide reads, in one-letter code: THUMP domain-containing protein 1 homolog (324 aa).

Disordered stretches follow at residues methionine 1–phenylalanine 24 and serine 67–aspartate 104. Residues glutamate 68 to glutamate 80 show a composition bias toward basic and acidic residues. Phosphothreonine is present on threonine 99. Serine 100 is subject to Phosphoserine. Residues aspartate 154–aspartate 260 enclose the THUMP domain. Residues asparagine 275 to lysine 324 are disordered. 2 stretches are compositionally biased toward basic and acidic residues: residues serine 277 to threonine 291 and asparagine 298 to lysine 324.

The protein belongs to the THUMPD1 family.

This Drosophila melanogaster (Fruit fly) protein is THUMP domain-containing protein 1 homolog.